The following is a 420-amino-acid chain: MGPLLVWHRGDLRLHDHPALLEALARGPVVGLVVLDPNNLKTTPRRRAWFLENVRALREAYRARGGALWVLEGLPWEKVPEAARRLKAKAVYALTSHTPYGRYRDGRVREALPVPLHLLPAPHLLPPDLPRAYRVYTPFSRLYRGAAPPLPPPEALPKGPEEGEIPREDPGLPLPEPGEEAALAGLRAFLEAKLPRYAEERDRLDGEGGSRLSPYFALGVLSPRLAAWEAERRGGEGARKWVAELLWRDFSYHLLYHFPWMAERPLDPRFQAFPWQEDEALFQAWYEGKTGVPLVDAAMRELHATGFLSNRARMNAAQFAVKHLLLPWKRCEEAFRHLLLDGDRAVNLQGWQWAGGLGVDAAPYFRVFNPVLQGERHDPEGRWLKRWAPEYPSYAPKDPVVDLEEARRRYLRLARDLARG.

The Photolyase/cryptochrome alpha/beta domain maps to 2 to 124 (GPLLVWHRGD…PLHLLPAPHL (123 aa)). The interval 147–176 (APPLPPPEALPKGPEEGEIPREDPGLPLPE) is disordered. The segment covering 159–170 (GPEEGEIPREDP) has biased composition (basic and acidic residues). An FAD-binding site is contributed by tyrosine 197. Residue arginine 201 participates in DNA binding. FAD contacts are provided by residues 209–213 (GSRLS), tryptophan 241, arginine 248, asparagine 310, and 341–343 (DGD). 2 interaction with DNA regions span residues 244-251 (ELLWRDFS) and 310-311 (NR). DNA is bound at residue glutamine 373.

Belongs to the DNA photolyase class-1 family. As to quaternary structure, monomer. FAD serves as cofactor.

It carries out the reaction cyclobutadipyrimidine (in DNA) = 2 pyrimidine residues (in DNA).. Its function is as follows. Involved in repair of UV radiation-induced DNA damage. Catalyzes the light-dependent monomerization (300-600 nm) of cyclobutyl pyrimidine dimers (in cis-syn configuration), which are formed between adjacent bases on the same DNA strand upon exposure to ultraviolet radiation. The polypeptide is Deoxyribodipyrimidine photo-lyase (phr) (Thermus thermophilus (strain ATCC 27634 / DSM 579 / HB8)).